The following is a 269-amino-acid chain: Cytochrome c oxidase subunit 3 (269 aa).

Residues 1-22 (MTHLERSRHQQHPFHMVMPSPW) are Mitochondrial matrix-facing. A helical transmembrane segment spans residues 23 to 41 (PIVVSFALLSLALSTALTM). Residues 42–48 (HGYIGNM) are Mitochondrial intermembrane-facing. Residues 49 to 73 (NMVYLALFVLLTSSILWFRDIVAEA) form a helical membrane-spanning segment. Residues 74-80 (TYLGDHT) are Mitochondrial matrix-facing. Residues 81 to 114 (MAVRKGINLGFLMFVLSEVLIFAGLFWAYFHSAM) form a helical membrane-spanning segment. At 115–137 (SPDVTLGACWPPVGIEAVQPTEL) the chain is on the mitochondrial intermembrane side. Residues 138-161 (PLLNTIILLSSGATVTYSHHALIA) form a helical membrane-spanning segment. The Mitochondrial matrix segment spans residues 162 to 164 (GNR). Residues 165-188 (NKALSGLLITFWLIVIFVTCQYIE) form a helical membrane-spanning segment. Topologically, residues 189-201 (YTNAAFTISDGVY) are mitochondrial intermembrane. The helical transmembrane segment at 202–230 (GSVFYAGTGLHFLHMVMLAAMLGVNYWRM) threads the bilayer. At 231–248 (RNYHLTAGHHVGYETTII) the chain is on the mitochondrial matrix side. The helical transmembrane segment at 249–265 (YTHVLDVIWLFLYVVFY) threads the bilayer. Topologically, residues 266-269 (WWGV) are mitochondrial intermembrane.

This sequence belongs to the cytochrome c oxidase subunit 3 family. Component of the cytochrome c oxidase (complex IV, CIV), a multisubunit enzyme composed of 12 subunits. The complex is composed of a catalytic core of 3 subunits COX1, COX2 and COX3, encoded in the mitochondrial DNA, and 9 supernumerary subunits COX4, COX5A (or COX5B), COX6, COX7, COX8, COX9, COX12, COX13 and COX26, which are encoded in the nuclear genome. The complex exists as a monomer or a dimer and forms supercomplexes (SCs) in the inner mitochondrial membrane with a dimer of ubiquinol-cytochrome c oxidoreductase (cytochrome b-c1 complex, complex III, CIII), resulting in 2 different assemblies (supercomplexes III(2)IV and III(2)IV(2)). Post-translationally, the N-terminus is blocked.

It is found in the mitochondrion inner membrane. It carries out the reaction 4 Fe(II)-[cytochrome c] + O2 + 8 H(+)(in) = 4 Fe(III)-[cytochrome c] + 2 H2O + 4 H(+)(out). Functionally, component of the cytochrome c oxidase, the last enzyme in the mitochondrial electron transport chain which drives oxidative phosphorylation. The respiratory chain contains 3 multisubunit complexes succinate dehydrogenase (complex II, CII), ubiquinol-cytochrome c oxidoreductase (cytochrome b-c1 complex, complex III, CIII) and cytochrome c oxidase (complex IV, CIV), that cooperate to transfer electrons derived from NADH and succinate to molecular oxygen, creating an electrochemical gradient over the inner membrane that drives transmembrane transport and the ATP synthase. Cytochrome c oxidase is the component of the respiratory chain that catalyzes the reduction of oxygen to water. Electrons originating from reduced cytochrome c in the intermembrane space (IMS) are transferred via the dinuclear copper A center (CU(A)) of COX2 and heme A of COX1 to the active site in COX1, a binuclear center (BNC) formed by heme A3 and copper B (CU(B)). The BNC reduces molecular oxygen to 2 water molecules using 4 electrons from cytochrome c in the IMS and 4 protons from the mitochondrial matrix. COX3 is a catalytic core subunit. This chain is Cytochrome c oxidase subunit 3 (COX3), found in Saccharomyces cerevisiae (strain ATCC 204508 / S288c) (Baker's yeast).